The chain runs to 163 residues: Nucleotide-binding protein RER_17110 (163 aa).

This sequence belongs to the YajQ family.

Nucleotide-binding protein. This Rhodococcus erythropolis (strain PR4 / NBRC 100887) protein is Nucleotide-binding protein RER_17110.